The following is a 558-amino-acid chain: TNF receptor-associated factor 5 (558 aa).

Residues 45 to 85 (CAFCHSVLHNPHQTGCGHRFCQQCIRSLRELNSVPICPVDK) form an RING-type zinc finger. TRAF-type zinc fingers lie at residues 127–181 (DHLQ…TNLQ) and 182–239 (DHEE…GNLL). A coiled-coil region spans residues 252–302 (LVLEKNYQLEQRISDLYQSLEQKESKIQQLAETVKKFEKELKQFTQMFGRN). K318 is covalently cross-linked (Glycyl lysine isopeptide (Lys-Gly) (interchain with G-Cter in ubiquitin)). Positions 340–400 (LDLRSLVDAV…EERFKQLEGA (61 aa)) form a coiled coil. Residues 345–558 (LVDAVDSVKQ…AVDLTDLEDL (214 aa)) are interaction with EIF2AK2/PKR. An MATH domain is found at 403–550 (SGKLIWKVTD…DDTLFLKVAV (148 aa)).

Belongs to the TNF receptor-associated factor family. A subfamily. In terms of assembly, homotrimer. Heterotrimer with TRAF3. Associates with TNFRSF5/CD40 through interaction with TRAF3. Associates with LTBR/TNFRSF3, TNFRSF4, TNFRSF8/CD30, TNFRSF11A/RANK, TNFRSF13B/TACI, TNFRSF14, TNFRSF17, TNFRSF19/TROY, RIPK2, MAP3K14, MAP3K5, and TRAF and TNF receptor associated protein TDP2. Interacts (via C-terminus) with EIF2AK2/PKR (via the kinase catalytic domain). In terms of processing, ubiquitinated at Lys-318 by the SCF(FBXL2) complex, leading to its degradation by the proteasome.

The protein resides in the cytoplasm. It localises to the cytosol. Functionally, adapter protein and signal transducer that links members of the tumor necrosis factor receptor family to different signaling pathways by association with the receptor cytoplasmic domain and kinases. Mediates activation of NF-kappa-B and probably JNK. Seems to be involved in apoptosis. Plays a role in mediating activation of NF-kappa-B by EIF2AK2/PKR. In Mus musculus (Mouse), this protein is TNF receptor-associated factor 5 (Traf5).